We begin with the raw amino-acid sequence, 259 residues long: uncharacterized protein (259 aa).

The tract at residues 171–259 is disordered; that stretch reads LSKMPVPQSP…SYSTYEDDDF (89 aa). A compositionally biased stretch (polar residues) spans 179–201; the sequence is SPSVPTMPSVNNDQPTQKPNKIT. Over residues 202 to 211 the composition is skewed to basic residues; sequence RNYKPKHQHN. Residues 212–236 are compositionally biased toward polar residues; that stretch reads YKPNYQPNYQPNYGQNCSNSHSNDY.

Its subcellular location is the virion. This is an uncharacterized protein from Acanthamoeba polyphaga (Amoeba).